A 224-amino-acid polypeptide reads, in one-letter code: Homeobox protein Hox-B6 (224 aa).

The Antp-type hexapeptide motif lies at Val127–Gln132. Positions Gly146 to Ser205 form a DNA-binding region, homeobox. Ser214 is subject to Phosphoserine.

Belongs to the Antp homeobox family.

It is found in the nucleus. Its function is as follows. Sequence-specific transcription factor which is part of a developmental regulatory system that provides cells with specific positional identities on the anterior-posterior axis. The sequence is that of Homeobox protein Hox-B6 (Hoxb6) from Mus musculus (Mouse).